The sequence spans 187 residues: LSM complex subunit LSM4 (187 aa).

Residues 2–85 (LPLYLLTNAK…IKFIKLQDNI (84 aa)) enclose the Sm domain. The disordered stretch occupies residues 93 to 187 (INSNNNSNSN…NSSSPQKVEF (95 aa)). Over residues 112–167 (NRDSNNNRGNYNRRNNNNGNSNRRPYSQNRQYNNSNSSNINNSINSINSNNQNMNN) the composition is skewed to low complexity. Arg-119 carries the post-translational modification Omega-N-methylarginine. Over residues 175 to 187 (HHFNSSSPQKVEF) the composition is skewed to polar residues. Ser-181 carries the post-translational modification Phosphoserine.

It belongs to the snRNP Sm proteins family. Component of the heptameric LSM1-LSM7 complex that forms a seven-membered ring structure with a donut shape. The LSm subunits are arranged in the order LSM1, LSM2, LSM3, LSM6, LSM5, LSM7 and LSM4. Except for LSM1, where a C-terminal helix crosses the ring structure to form additional interactions with LSM3 and LSM6, each subunit interacts only with its two neighboring subunits. The LSM1-LSM7 complex interacts with PAT1; within the complex PAT1 has direct interactions with LSM2 and LSM3. The LSM1-LSM7 complex interacts with XRN1. Component of the heptameric LSM2-LSM8 complex that forms a seven-membered ring structure with a donut shape; an RNA strand can pass through the hole in the center of the ring structure. The LSm subunits are arranged in the order LSM8, LSM2, LSM3, LSM6, LSM5, LSM7 and LSM4. Component of the spliceosome U4/U6-U5 tri-snRNP complex composed of the U4, U6 and U5 snRNAs and at least PRP3, PRP4, PRP6, PRP8, PRP18, PRP31, PRP38, SNU13, SNU23, SNU66, SNU114, SPP381, SMB1, SMD1, SMD2, SMD3, SMX2, SMX3, LSM2, LSM3, LSM4, LSM5, LSM6, LSM7, LSM8, BRR2 and DIB1. May be found in a complex comprising LSM2-LSM7 without LSM1 or LSM8; the complex associates with pre-P RNA and snoRNA SNR5.

It is found in the nucleus. The protein localises to the cytoplasm. Component of LSm protein complexes, which are involved in RNA processing and may function in a chaperone-like manner. Component of the cytoplasmic LSM1-LSM7 complex which is involved in mRNA degradation by activating the decapping step. Together with PAT1, the LSM1-LSM7 complex binds to osmotic stress-activated mRNAs to attenuate the osmotic stress response, probably by limiting ribosome access to the mRNA and consequently translation. Component of the nuclear LSM2-LSM8 complex, which is involved in spliceosome assembly. The LSM2-LSM8 complex plays a role in the biogenesis of the spliceosomal U4/U6-U5 tri-snRNP complex by accelerating PRP24-mediated annealing of U4/U6 di-snRNA. The LSM2-LSM8 complex binds U6 snRNA terminating with a non-cyclic 3' phosphate group. LSM2-LSM8 is probably also involved in degradation of nuclear pre-mRNA by targeting them for decapping. LSM2-LSM8 could be involved in processing of pre-tRNAs, pre-rRNAs and U3 snoRNA, although involvement may be indirect. In a complex that probably contains LSM2-LSM7, but not LSM1 or LSM8, associates with the precursor of the RNA component of RNase P (pre-P RNA) and may be involved in maturing pre-P RNA; the complex also associates with snoRNA SNR5. The chain is LSM complex subunit LSM4 from Saccharomyces cerevisiae (strain ATCC 204508 / S288c) (Baker's yeast).